The sequence spans 130 residues: Organic solute transporter subunit beta (130 aa).

Residues 1–35 (MNYSEKLTGAPPMTEVPLELLEEMLWFFRVEDATP) are Extracellular-facing. A helical transmembrane segment spans residues 36-56 (WNCSMFVLAALVAIISFILLG). The Cytoplasmic segment spans residues 57-130 (RNIQANRNQK…HLPDPQEPES (74 aa)). The disordered stretch occupies residues 99–130 (LSEKPTLAQGEMEAKCSDVPRVHLPDPQEPES). The span at 110–124 (MEAKCSDVPRVHLPD) shows a compositional bias: basic and acidic residues.

It belongs to the OST-beta family. As to quaternary structure, interacts with SLC51A. The Ost-alpha/Ost-beta complex is a heterodimer composed of alpha (SLC51A) and beta (SLC51B) subunit; induces the transport of SLC51A from the endoplasmic reticulum to the plasma membrane.

Its subcellular location is the cell membrane. The catalysed reaction is taurocholate(out) = taurocholate(in). The enzyme catalyses estrone 3-sulfate(out) = estrone 3-sulfate(in). It carries out the reaction dehydroepiandrosterone 3-sulfate(out) = dehydroepiandrosterone 3-sulfate(in). It catalyses the reaction tauroursodeoxycholate(out) = tauroursodeoxycholate(in). The catalysed reaction is glycoursodeoxycholate(out) = glycoursodeoxycholate(in). The enzyme catalyses glycocholate(out) = glycocholate(in). It carries out the reaction taurochenodeoxycholate(out) = taurochenodeoxycholate(in). It catalyses the reaction glycochenodeoxycholate(out) = glycochenodeoxycholate(in). The catalysed reaction is taurodeoxycholate(out) = taurodeoxycholate(in). The enzyme catalyses glycodeoxycholate(out) = glycodeoxycholate(in). It carries out the reaction prostaglandin E2(out) = prostaglandin E2(in). Essential component of the Ost-alpha/Ost-beta complex, a heterodimer that acts as the intestinal basolateral transporter responsible for bile acid export from enterocytes into portal blood. The Ost-alpha/Ost-beta complex efficiently transports the major species of bile acids (taurocholate). Taurine conjugates are transported more efficiently across the basolateral membrane than glycine-conjugated bile acids. Can also transport steroids such as estrone 3-sulfate and dehydroepiandrosterone 3-sulfate, therefore playing a role in the enterohepatic circulation of sterols. Able to transport eicosanoids such as prostaglandin E2. Modulates SLC51A glycosylation, membrane trafficking and stability activities. The chain is Organic solute transporter subunit beta (SLC51B) from Bos taurus (Bovine).